The sequence spans 236 residues: Exosome complex component Rrp4 (236 aa).

The region spanning 64-133 (GDKVIGKIIE…EIKESWLTLK (70 aa)) is the S1 motif domain. Residues 141–199 (EGGHMVLIHASRVPRVIGKGGGMVNMVKELTSTRIIIGQNGLIWIDGPIEGVTMAIAAI) enclose the KH domain.

The protein belongs to the RRP4 family. As to quaternary structure, component of the archaeal exosome complex. Forms a trimer of Rrp4 and/or Csl4 subunits. The trimer associates with a hexameric ring-like arrangement composed of 3 Rrp41-Rrp42 heterodimers.

The protein resides in the cytoplasm. Its function is as follows. Non-catalytic component of the exosome, which is a complex involved in RNA degradation. Increases the RNA binding and the efficiency of RNA degradation. Confers strong poly(A) specificity to the exosome. The sequence is that of Exosome complex component Rrp4 from Thermoplasma volcanium (strain ATCC 51530 / DSM 4299 / JCM 9571 / NBRC 15438 / GSS1).